The following is a 333-amino-acid chain: L-lactate dehydrogenase B chain (333 aa).

Residues 29 to 57 (GQVG…IEDK) and Arg-99 each bind NAD(+). Substrate contacts are provided by Arg-106, Asn-138, and Arg-169. Asn-138 provides a ligand contact to NAD(+). His-193 (proton acceptor) is an active-site residue. Thr-248 contributes to the substrate binding site.

Belongs to the LDH/MDH superfamily. LDH family. As to quaternary structure, homotetramer.

Its subcellular location is the cytoplasm. The enzyme catalyses (S)-lactate + NAD(+) = pyruvate + NADH + H(+). It participates in fermentation; pyruvate fermentation to lactate; (S)-lactate from pyruvate: step 1/1. Functionally, interconverts simultaneously and stereospecifically pyruvate and lactate with concomitant interconversion of NADH and NAD(+). In Anguilla rostrata (American eel), this protein is L-lactate dehydrogenase B chain (ldhb).